Here is a 387-residue protein sequence, read N- to C-terminus: 3-ketoacyl-CoA thiolase (387 aa).

Cys91 serves as the catalytic Acyl-thioester intermediate. Residues His343 and Cys373 each act as proton acceptor in the active site.

Belongs to the thiolase-like superfamily. Thiolase family. In terms of assembly, heterotetramer of two alpha chains (FadB) and two beta chains (FadA).

The protein resides in the cytoplasm. It carries out the reaction an acyl-CoA + acetyl-CoA = a 3-oxoacyl-CoA + CoA. It functions in the pathway lipid metabolism; fatty acid beta-oxidation. In terms of biological role, catalyzes the final step of fatty acid oxidation in which acetyl-CoA is released and the CoA ester of a fatty acid two carbons shorter is formed. The protein is 3-ketoacyl-CoA thiolase of Shewanella baltica (strain OS185).